The chain runs to 162 residues: Peptide deformylase-like (162 aa).

Belongs to the polypeptide deformylase family.

The chain is Peptide deformylase-like from Staphylococcus aureus (strain MRSA252).